A 217-amino-acid polypeptide reads, in one-letter code: Ranaspumin (217 aa).

4 cysteine pairs are disulfide-bonded: Cys-18–Cys-67, Cys-38–Cys-114, Cys-125–Cys-168, and Cys-146–Cys-207.

In terms of assembly, monomer. As to expression, exclusively expressed in females in the early oviduct, the glandular part of the oviduct (pars convoluta dilata) and in the cloaca.

Its subcellular location is the secreted. In terms of biological role, acts as a surfactant. Is the major protein constituent (45%) of foam nests. Has no antimicrobial activity, no larvicidal activity, and is not toxic to mice. The sequence is that of Ranaspumin from Leptodactylus vastus (Northeastern pepper frog).